The primary structure comprises 336 residues: tRNA N6-adenosine threonylcarbamoyltransferase (336 aa).

2 residues coordinate Fe cation: histidine 114 and histidine 118. Residues 136–140 (LVSGG), aspartate 169, glycine 182, aspartate 186, and asparagine 275 contribute to the substrate site. Aspartate 302 provides a ligand contact to Fe cation.

This sequence belongs to the KAE1 / TsaD family. The cofactor is Fe(2+).

It localises to the cytoplasm. It carries out the reaction L-threonylcarbamoyladenylate + adenosine(37) in tRNA = N(6)-L-threonylcarbamoyladenosine(37) in tRNA + AMP + H(+). Functionally, required for the formation of a threonylcarbamoyl group on adenosine at position 37 (t(6)A37) in tRNAs that read codons beginning with adenine. Is involved in the transfer of the threonylcarbamoyl moiety of threonylcarbamoyl-AMP (TC-AMP) to the N6 group of A37, together with TsaE and TsaB. TsaD likely plays a direct catalytic role in this reaction. In Streptococcus agalactiae serotype V (strain ATCC BAA-611 / 2603 V/R), this protein is tRNA N6-adenosine threonylcarbamoyltransferase.